The following is a 298-amino-acid chain: METQRLRIAMQKSGRLSQDSQALFKSCGLKINLREQRLIAHVENMPIDILRVRDDDIPGLVMEGVVDLGIIGENVLEEVQLIRASQGQPFAVKTLKQLDFGGCRLSLAVPDDVTYTGPQSLAGKRIATSYPGLLKRFFDEKGLSFKSVMLGGSVEVAPRAGLADAICDLVSTGATLEANGLKEVEVIYRSKAVLVQAPNPLSDAKQKIIDTLLPRIQGMQQARESKYIMLHAPKDKLDAITDLLPGAERPTIMQLAGETNQVALHVVSSETLFWETMEQLKALGASSILVLPIEKMME.

Belongs to the ATP phosphoribosyltransferase family. Long subfamily. Mg(2+) is required as a cofactor.

It is found in the cytoplasm. It catalyses the reaction 1-(5-phospho-beta-D-ribosyl)-ATP + diphosphate = 5-phospho-alpha-D-ribose 1-diphosphate + ATP. It participates in amino-acid biosynthesis; L-histidine biosynthesis; L-histidine from 5-phospho-alpha-D-ribose 1-diphosphate: step 1/9. Feedback inhibited by histidine. Functionally, catalyzes the condensation of ATP and 5-phosphoribose 1-diphosphate to form N'-(5'-phosphoribosyl)-ATP (PR-ATP). Has a crucial role in the pathway because the rate of histidine biosynthesis seems to be controlled primarily by regulation of HisG enzymatic activity. The chain is ATP phosphoribosyltransferase from Aeromonas hydrophila subsp. hydrophila (strain ATCC 7966 / DSM 30187 / BCRC 13018 / CCUG 14551 / JCM 1027 / KCTC 2358 / NCIMB 9240 / NCTC 8049).